A 492-amino-acid polypeptide reads, in one-letter code: Nuclear autoantigenic sperm protein homolog (492 aa).

Residues 1–14 show a composition bias toward low complexity; it reads MSAEAEAIVTTATA. Disordered stretches follow at residues 1–52 and 123–254; these read MSAE…EQER and DVPD…EEGV. Phosphothreonine occurs at positions 32 and 33. Residues 124–145 are compositionally biased toward acidic residues; the sequence is VPDEAADDDDEDVDDDEEESAE. Basic and acidic residues-rich tracts occupy residues 147–159 and 170–179; these read GAAK…DTKE and KELDTIKEGS. A phosphoserine mark is found at Ser-179 and Ser-184. Phosphothreonine is present on Thr-185. Ser-193 carries the post-translational modification Phosphoserine. Residues 226 to 238 show a composition bias toward polar residues; sequence STSNGEVTASCSN. Acidic residues predominate over residues 244-253; sequence VEEEPEEEEG. 2 TPR repeats span residues 284 to 317 and 326 to 359; these read AEVQ…HGEL and AELH…IEEE. The stretch at 377–400 forms a coiled coil; that stretch reads MLDLEETKQEILAKIQEIEEMQAQ. Low complexity predominate over residues 418–459; that stretch reads SGDAAAASSSSSSSANGAASSSSSSSKGAAAASSSTISSSSA. Residues 418–492 form a disordered region; it reads SGDAAAASSS…LCSPAKRAAV (75 aa). Phosphoserine occurs at positions 478 and 485.

This sequence belongs to the NASP family. In terms of assembly, interacts with the histone H3-H4 heterodimer; the interaction with H4 is probably indirect and mediated by H3 (His3, His3.3A and His3.3B). Interacts with His2Av; this interaction directly or indirectly destabilizes His2Av.

It is found in the cytoplasm. The protein resides in the nucleus. It localises to the perinuclear region. In terms of biological role, component of the histone chaperone network. Binds and stabilizes histone H3-H4 not bound to chromatin to maintain a soluble reservoir and modulate degradation by chaperone-mediated autophagy. May also bind and stabilize monomeric H3. Maternal effect gene essential for early embryogenesis. In Drosophila melanogaster (Fruit fly), this protein is Nuclear autoantigenic sperm protein homolog.